The following is a 264-amino-acid chain: uncharacterized protein (264 aa).

Residues histidine 5, histidine 7, glutamate 93, histidine 134, histidine 158, and aspartate 208 each contribute to the a divalent metal cation site.

This sequence belongs to the metallo-dependent hydrolases superfamily. TatD-type hydrolase family. It depends on a divalent metal cation as a cofactor.

This is an uncharacterized protein from Mycobacterium tuberculosis (strain ATCC 25618 / H37Rv).